The chain runs to 754 residues: Phosphoribosylformylglycinamidine synthase subunit PurL (754 aa).

H54 is a catalytic residue. Residues Y57 and K101 each coordinate ATP. E103 serves as a coordination point for Mg(2+). Substrate is bound by residues 104-107 (SHNH) and R126. Catalysis depends on H105, which acts as the Proton acceptor. D127 is a Mg(2+) binding site. Residue Q252 participates in substrate binding. Mg(2+) is bound at residue D280. 324 to 326 (ESQ) contributes to the substrate binding site. Residues 386–412 (PVYQRPVSRPESQEALNADSSKGLPRP) are disordered. ATP contacts are provided by N512 and G549. N550 is a Mg(2+) binding site. S552 provides a ligand contact to substrate.

It belongs to the FGAMS family. In terms of assembly, monomer. Part of the FGAM synthase complex composed of 1 PurL, 1 PurQ and 2 PurS subunits.

It localises to the cytoplasm. The enzyme catalyses N(2)-formyl-N(1)-(5-phospho-beta-D-ribosyl)glycinamide + L-glutamine + ATP + H2O = 2-formamido-N(1)-(5-O-phospho-beta-D-ribosyl)acetamidine + L-glutamate + ADP + phosphate + H(+). Its pathway is purine metabolism; IMP biosynthesis via de novo pathway; 5-amino-1-(5-phospho-D-ribosyl)imidazole from N(2)-formyl-N(1)-(5-phospho-D-ribosyl)glycinamide: step 1/2. Its function is as follows. Part of the phosphoribosylformylglycinamidine synthase complex involved in the purines biosynthetic pathway. Catalyzes the ATP-dependent conversion of formylglycinamide ribonucleotide (FGAR) and glutamine to yield formylglycinamidine ribonucleotide (FGAM) and glutamate. The FGAM synthase complex is composed of three subunits. PurQ produces an ammonia molecule by converting glutamine to glutamate. PurL transfers the ammonia molecule to FGAR to form FGAM in an ATP-dependent manner. PurS interacts with PurQ and PurL and is thought to assist in the transfer of the ammonia molecule from PurQ to PurL. The protein is Phosphoribosylformylglycinamidine synthase subunit PurL of Mycobacterium leprae (strain Br4923).